We begin with the raw amino-acid sequence, 504 residues long: Maturase K (504 aa).

It belongs to the intron maturase 2 family. MatK subfamily.

It is found in the plastid. It localises to the chloroplast. Functionally, usually encoded in the trnK tRNA gene intron. Probably assists in splicing its own and other chloroplast group II introns. This chain is Maturase K, found in Fagus japonica (Japanese beech).